A 334-amino-acid polypeptide reads, in one-letter code: NADH-ubiquinone oxidoreductase chain 1 (334 aa).

The next 9 membrane-spanning stretches (helical) occupy residues 4-24, 82-102, 115-135, 161-181, 187-207, 222-242, 247-267, 268-288, and 311-331; these read FVFL…IIVI, FIYV…WGVI, IGIL…LMSG, IGLI…TEIV, GIWF…SALA, ELVS…FFLA, IILM…SPIV, FFKG…LLFI, and LPLS…LNGL.

This sequence belongs to the complex I subunit 1 family.

The protein localises to the mitochondrion inner membrane. The enzyme catalyses a ubiquinone + NADH + 5 H(+)(in) = a ubiquinol + NAD(+) + 4 H(+)(out). In terms of biological role, core subunit of the mitochondrial membrane respiratory chain NADH dehydrogenase (Complex I) that is believed to belong to the minimal assembly required for catalysis. Complex I functions in the transfer of electrons from NADH to the respiratory chain. The immediate electron acceptor for the enzyme is believed to be ubiquinone. This is NADH-ubiquinone oxidoreductase chain 1 (ND1) from Metridium senile (Brown sea anemone).